Here is a 312-residue protein sequence, read N- to C-terminus: Cytochrome f (312 aa).

Positions 1-28 (MQISKFFKFVFISVSLCGSLLFPQMANA) are cleaved as a signal peptide. Heme-binding residues include Tyr-29, Cys-49, Cys-52, and His-53. A helical membrane pass occupies residues 278 to 298 (VKGMIAFFFTVTVAQILLVLK).

Belongs to the cytochrome f family. In terms of assembly, the 4 large subunits of the cytochrome b6-f complex are cytochrome b6, subunit IV (17 kDa polypeptide, petD), cytochrome f and the Rieske protein, while the 4 small subunits are PetG, PetL, PetM and PetN. The complex functions as a dimer. Heme is required as a cofactor.

It is found in the plastid. It localises to the chloroplast thylakoid membrane. Component of the cytochrome b6-f complex, which mediates electron transfer between photosystem II (PSII) and photosystem I (PSI), cyclic electron flow around PSI, and state transitions. This is Cytochrome f from Emiliania huxleyi (Coccolithophore).